Reading from the N-terminus, the 55-residue chain is Large ribosomal subunit protein bL33 (55 aa).

It belongs to the bacterial ribosomal protein bL33 family.

In Jannaschia sp. (strain CCS1), this protein is Large ribosomal subunit protein bL33.